The primary structure comprises 295 residues: Bifunctional protein FolD (295 aa).

Residues 167-169, Ser192, and Ile233 contribute to the NADP(+) site; that span reads GRS.

It belongs to the tetrahydrofolate dehydrogenase/cyclohydrolase family. Homodimer.

It carries out the reaction (6R)-5,10-methylene-5,6,7,8-tetrahydrofolate + NADP(+) = (6R)-5,10-methenyltetrahydrofolate + NADPH. The catalysed reaction is (6R)-5,10-methenyltetrahydrofolate + H2O = (6R)-10-formyltetrahydrofolate + H(+). It functions in the pathway one-carbon metabolism; tetrahydrofolate interconversion. Its function is as follows. Catalyzes the oxidation of 5,10-methylenetetrahydrofolate to 5,10-methenyltetrahydrofolate and then the hydrolysis of 5,10-methenyltetrahydrofolate to 10-formyltetrahydrofolate. This Paramagnetospirillum magneticum (strain ATCC 700264 / AMB-1) (Magnetospirillum magneticum) protein is Bifunctional protein FolD.